Consider the following 461-residue polypeptide: D-arabinono-1,4-lactone oxidase (461 aa).

The region spanning 24-194 (FSAISLGLRC…VDITISVVPA (171 aa)) is the FAD-binding PCMH-type domain. His61 carries the post-translational modification Pros-8alpha-FAD histidine.

The protein belongs to the oxygen-dependent FAD-linked oxidoreductase family. The cofactor is FAD.

It localises to the mitochondrion membrane. The catalysed reaction is D-arabinono-1,4-lactone + O2 = dehydro-D-arabinono-1,4-lactone + H2O2 + H(+). Its pathway is cofactor biosynthesis; D-erythroascorbate biosynthesis; dehydro-D-arabinono-1,4-lactone from D-arabinose: step 2/2. The sequence is that of D-arabinono-1,4-lactone oxidase (alo1) from Schizosaccharomyces pombe (strain 972 / ATCC 24843) (Fission yeast).